The sequence spans 360 residues: Protein Wnt-2 (360 aa).

The signal sequence occupies residues 1–25; sequence MNAPLGGIWPWLPLLLTWLTPEVSS. Cystine bridges form between cysteine 76–cysteine 87, cysteine 127–cysteine 135, cysteine 137–cysteine 157, cysteine 206–cysteine 220, cysteine 208–cysteine 215, cysteine 278–cysteine 309, cysteine 294–cysteine 304, cysteine 308–cysteine 348, cysteine 324–cysteine 339, cysteine 326–cysteine 336, and cysteine 331–cysteine 332. Residue serine 212 is the site of O-palmitoleoyl serine; by PORCN attachment. An N-linked (GlcNAc...) asparagine glycan is attached at asparagine 295.

It belongs to the Wnt family. Post-translationally, palmitoleoylation is required for efficient binding to frizzled receptors. Depalmitoleoylation leads to Wnt signaling pathway inhibition.

The protein resides in the secreted. The protein localises to the extracellular space. Its subcellular location is the extracellular matrix. In terms of biological role, ligand for members of the frizzled family of seven transmembrane receptors. Functions in the canonical Wnt signaling pathway that results in activation of transcription factors of the TCF/LEF family. Functions as a upstream regulator of FGF10 expression. Plays an important role in embryonic lung development. May contribute to embryonic brain development by regulating the proliferation of dopaminergic precursors and neurons. This is Protein Wnt-2 (WNT2) from Felis catus (Cat).